Consider the following 358-residue polypeptide: Photosystem II protein D1 3 (358 aa).

3 helical membrane passes run 28–45, 117–132, and 141–155; these read YIGW…AATT, HFLI…QWEL, and WICV…AAMA. Residue histidine 117 coordinates chlorophyll a. A pheophytin a-binding site is contributed by tyrosine 125. Residues aspartate 169 and glutamate 188 each coordinate [CaMn4O5] cluster. A helical transmembrane segment spans residues 196-217; it reads FHMLGVAGVFGGSLFSAMHGSL. Histidine 197 provides a ligand contact to chlorophyll a. Residues histidine 214 and 263 to 264 contribute to the a quinone site; that span reads SF. Histidine 214 serves as a coordination point for Fe cation. Residue histidine 271 participates in Fe cation binding. The chain crosses the membrane as a helical span at residues 273 to 287; the sequence is LLGAWPVVGIWFTSM. [CaMn4O5] cluster is bound by residues histidine 331, glutamate 332, aspartate 341, and alanine 343. The propeptide occupies 344–358; it reads TVESTPVALQAPAIG.

Belongs to the reaction center PufL/M/PsbA/D family. As to quaternary structure, PSII is composed of 1 copy each of membrane proteins PsbA, PsbB, PsbC, PsbD, PsbE, PsbF, PsbH, PsbI, PsbJ, PsbK, PsbL, PsbM, PsbT, PsbX, PsbY, PsbZ, Psb30/Ycf12, peripheral proteins PsbO, CyanoQ (PsbQ), PsbU, PsbV and a large number of cofactors. It forms dimeric complexes. It depends on The D1/D2 heterodimer binds P680, chlorophylls that are the primary electron donor of PSII, and subsequent electron acceptors. It shares a non-heme iron and each subunit binds pheophytin, quinone, additional chlorophylls, carotenoids and lipids. D1 provides most of the ligands for the Mn4-Ca-O5 cluster of the oxygen-evolving complex (OEC). There is also a Cl(-1) ion associated with D1 and D2, which is required for oxygen evolution. The PSII complex binds additional chlorophylls, carotenoids and specific lipids. as a cofactor. In terms of processing, tyr-160 forms a radical intermediate that is referred to as redox-active TyrZ, YZ or Y-Z. Post-translationally, C-terminally processed by CtpA; processing is essential to allow assembly of the oxygen-evolving complex and thus photosynthetic growth.

It localises to the cellular thylakoid membrane. The enzyme catalyses 2 a plastoquinone + 4 hnu + 2 H2O = 2 a plastoquinol + O2. In terms of biological role, photosystem II (PSII) is a light-driven water:plastoquinone oxidoreductase that uses light energy to abstract electrons from H(2)O, generating O(2) and a proton gradient subsequently used for ATP formation. It consists of a core antenna complex that captures photons, and an electron transfer chain that converts photonic excitation into a charge separation. The D1/D2 (PsbA/PsbD) reaction center heterodimer binds P680, the primary electron donor of PSII as well as several subsequent electron acceptors. The sequence is that of Photosystem II protein D1 3 from Synechococcus sp. (strain CC9311).